We begin with the raw amino-acid sequence, 954 residues long: Regulatory protein FlaEY (954 aa).

Functions in trans to modulate the level of transcription of the flagellin genes and several genes encoding chemotaxis functions. It is itself temporally controlled. This chain is Regulatory protein FlaEY (flaEY), found in Caulobacter vibrioides (strain ATCC 19089 / CIP 103742 / CB 15) (Caulobacter crescentus).